A 729-amino-acid chain; its full sequence is Probable cyclic di-GMP phosphodiesterase PdeA (729 aa).

The next 8 helical transmembrane spans lie at 17 to 37 (AFTL…LAII), 41 to 61 (YIFL…IFGW), 83 to 103 (FLQT…ACAI), 126 to 146 (FWLG…VGSF), 163 to 183 (IFTV…NMLF), 214 to 234 (AFTL…CTPY), 238 to 258 (FIAG…VGKL), and 289 to 309 (YSLA…LYMV). The GGDEF domain occupies 348-476 (AGKSFCCLRI…AHHHVLALDS (129 aa)). The region spanning 488-729 (QVLLLNTIRT…LIGRPQPLAD (242 aa)) is the EAL domain.

It is found in the cell membrane. The enzyme catalyses 3',3'-c-di-GMP + H2O = 5'-phosphoguanylyl(3'-&gt;5')guanosine + H(+). Functionally, phosphodiesterase (PDE) that catalyzes the hydrolysis of cyclic-di-GMP (c-di-GMP) to 5'-pGpG. The protein is Probable cyclic di-GMP phosphodiesterase PdeA of Escherichia coli (strain K12).